A 341-amino-acid polypeptide reads, in one-letter code: Serpentine receptor class alpha-28 (341 aa).

Helical transmembrane passes span 25-45 (FIISIIIISFFTTTKSVRVLL), 57-77 (LLFSAIINGIIHQCVTAVIRL), 107-129 (YYYTNLFSSFCCFSLFLDRLFSF), 142-162 (ASIVLILSQIVLPIGPLYWVF), 188-208 (VNNIRICVLIVLLFFAIFLYI), 242-262 (IVIFSQILCVGPTSSITSVFI), and 275-295 (LIISYLTGLTYSNFLLPLIIL).

This sequence belongs to the nematode receptor-like protein sra family.

It localises to the membrane. The polypeptide is Serpentine receptor class alpha-28 (sra-28) (Caenorhabditis elegans).